The sequence spans 393 residues: MTNSNRIKLTWISFLSYALTGALVIVTGMVMGNIADYFHLPVSSMSNTFTFLNAGILISIFLNAWLMEIVPLKTQLRFGFILMVLAVAGLMFSHSLALFSAAMFVLGLVSGITMSIGTFLITQLYEGRQRGSRLLFTDSFFSMAGMIFPMVAAFLLARSIEWYWVYACIGLVYLAIFILTFGCEFPALGKHAQHSQAPVAKEKWGIGVLFLAVAALCYILGQLGFISWVPEYAKGLGMSLNDAGALVSDFWMSYMFGMWAFSFILRFFDLQRILTVLAGMAAVLMYLFITGTQAHMPWFILTLGFFSSAIYTSIITLGSQQTKVASPKLVNFILTCGTIGTMLTFVVTGPIVAHRGPQAALLTANGLYAVVFVMCFALGFVSRHRQHSAPATH.

The next 12 membrane-spanning stretches (helical) occupy residues W11–M31, F51–P71, F78–L98, A101–I121, L134–F154, W162–G182, I206–I226, A245–L265, I273–Q293, W298–G318, F332–V352, and L361–V381.

It belongs to the major facilitator superfamily. TsgA family.

It is found in the cell inner membrane. The chain is Protein TsgA from Salmonella gallinarum (strain 287/91 / NCTC 13346).